The following is a 339-amino-acid chain: Ketol-acid reductoisomerase (NADP(+)) (339 aa).

Residues 1-182 (MKIYYEKDAD…GNTRAGVIET (182 aa)) enclose the KARI N-terminal Rossmann domain. NADP(+) contacts are provided by residues 24–27 (YGSQ), S51, S53, and 83–86 (DEKQ). H108 is a catalytic residue. G134 contacts NADP(+). The region spanning 183–328 (SFREETETDL…EKLRGMMHWA (146 aa)) is the KARI C-terminal knotted domain. Mg(2+) contacts are provided by D191, E195, E227, and E231. S252 lines the substrate pocket.

It belongs to the ketol-acid reductoisomerase family. Mg(2+) is required as a cofactor.

It carries out the reaction (2R)-2,3-dihydroxy-3-methylbutanoate + NADP(+) = (2S)-2-acetolactate + NADPH + H(+). The enzyme catalyses (2R,3R)-2,3-dihydroxy-3-methylpentanoate + NADP(+) = (S)-2-ethyl-2-hydroxy-3-oxobutanoate + NADPH + H(+). It participates in amino-acid biosynthesis; L-isoleucine biosynthesis; L-isoleucine from 2-oxobutanoate: step 2/4. Its pathway is amino-acid biosynthesis; L-valine biosynthesis; L-valine from pyruvate: step 2/4. Involved in the biosynthesis of branched-chain amino acids (BCAA). Catalyzes an alkyl-migration followed by a ketol-acid reduction of (S)-2-acetolactate (S2AL) to yield (R)-2,3-dihydroxy-isovalerate. In the isomerase reaction, S2AL is rearranged via a Mg-dependent methyl migration to produce 3-hydroxy-3-methyl-2-ketobutyrate (HMKB). In the reductase reaction, this 2-ketoacid undergoes a metal-dependent reduction by NADPH to yield (R)-2,3-dihydroxy-isovalerate. The polypeptide is Ketol-acid reductoisomerase (NADP(+)) (Hyphomonas neptunium (strain ATCC 15444)).